We begin with the raw amino-acid sequence, 32 residues long: Photosystem I reaction center subunit XII (32 aa).

The helical transmembrane segment at Ser3–Ala23 threads the bilayer.

This sequence belongs to the PsaM family.

The protein localises to the plastid. It is found in the chloroplast thylakoid membrane. This is Photosystem I reaction center subunit XII from Anthoceros angustus (Hornwort).